We begin with the raw amino-acid sequence, 186 residues long: Trafficking protein particle complex subunit 3 (186 aa).

This sequence belongs to the TRAPP small subunits family. BET3 subfamily. Homodimer. Part of the multisubunit TRAPP (transport protein particle) complex.

It localises to the golgi apparatus. Its subcellular location is the cis-Golgi network. The protein resides in the endoplasmic reticulum. In terms of biological role, may play a role in vesicular transport from endoplasmic reticulum to Golgi. The polypeptide is Trafficking protein particle complex subunit 3 (trappc3) (Dictyostelium discoideum (Social amoeba)).